A 240-amino-acid polypeptide reads, in one-letter code: Large ribosomal subunit protein uL2 (240 aa).

Residues 1-11 (MGKRLISQNRG) are compositionally biased toward polar residues. Disordered regions lie at residues 1–25 (MGKR…HKRK) and 207–240 (GGRH…TGKR). 2 stretches are compositionally biased toward basic residues: residues 13-25 (GTPK…HKRK) and 224-240 (SPGR…TGKR).

This sequence belongs to the universal ribosomal protein uL2 family. As to quaternary structure, part of the 50S ribosomal subunit. Forms a bridge to the 30S subunit in the 70S ribosome.

Functionally, one of the primary rRNA binding proteins. Required for association of the 30S and 50S subunits to form the 70S ribosome, for tRNA binding and peptide bond formation. It has been suggested to have peptidyltransferase activity; this is somewhat controversial. Makes several contacts with the 16S rRNA in the 70S ribosome. This chain is Large ribosomal subunit protein uL2, found in Methanococcus maripaludis (strain DSM 14266 / JCM 13030 / NBRC 101832 / S2 / LL).